Here is a 175-residue protein sequence, read N- to C-terminus: Large ribosomal subunit protein uL18 (175 aa).

It belongs to the universal ribosomal protein uL18 family. In terms of assembly, part of the 50S ribosomal subunit. Contacts the 5S and 23S rRNAs.

In terms of biological role, this is one of the proteins that bind and probably mediate the attachment of the 5S RNA into the large ribosomal subunit, where it forms part of the central protuberance. This Methanosphaerula palustris (strain ATCC BAA-1556 / DSM 19958 / E1-9c) protein is Large ribosomal subunit protein uL18.